The primary structure comprises 188 residues: Elongation factor P 1 (188 aa).

Belongs to the elongation factor P family.

It localises to the cytoplasm. The protein operates within protein biosynthesis; polypeptide chain elongation. Functionally, involved in peptide bond synthesis. Stimulates efficient translation and peptide-bond synthesis on native or reconstituted 70S ribosomes in vitro. Probably functions indirectly by altering the affinity of the ribosome for aminoacyl-tRNA, thus increasing their reactivity as acceptors for peptidyl transferase. This chain is Elongation factor P 1 (efp1), found in Porphyromonas gingivalis (strain ATCC BAA-308 / W83).